A 201-amino-acid chain; its full sequence is Proteasome subunit beta 1 (201 aa).

The propeptide at 1–10 (MNGSPSAMKG) is removed in mature form; by autocatalysis. The active-site Nucleophile is Thr-11.

Belongs to the peptidase T1B family. The 20S proteasome core is composed of 14 alpha and 14 beta subunits that assemble into four stacked heptameric rings, resulting in a barrel-shaped structure. The two inner rings, each composed of seven catalytic beta subunits, are sandwiched by two outer rings, each composed of seven alpha subunits. The catalytic chamber with the active sites is on the inside of the barrel. Has a gated structure, the ends of the cylinder being occluded by the N-termini of the alpha-subunits. Is capped at one or both ends by the proteasome regulatory ATPase, PAN.

The protein localises to the cytoplasm. It catalyses the reaction Cleavage of peptide bonds with very broad specificity.. The formation of the proteasomal ATPase PAN-20S proteasome complex, via the docking of the C-termini of PAN into the intersubunit pockets in the alpha-rings, triggers opening of the gate for substrate entry. Interconversion between the open-gate and close-gate conformations leads to a dynamic regulation of the 20S proteasome proteolysis activity. Functionally, component of the proteasome core, a large protease complex with broad specificity involved in protein degradation. This is Proteasome subunit beta 1 from Thermococcus gammatolerans (strain DSM 15229 / JCM 11827 / EJ3).